A 160-amino-acid chain; its full sequence is ATP synthase subunit b (160 aa).

The helical transmembrane segment at leucine 15–glutamate 35 threads the bilayer.

It belongs to the ATPase B chain family. In terms of assembly, F-type ATPases have 2 components, F(1) - the catalytic core - and F(0) - the membrane proton channel. F(1) has five subunits: alpha(3), beta(3), gamma(1), delta(1), epsilon(1). F(0) has four main subunits: a(1), b(1), b'(1) and c(10-14). The alpha and beta chains form an alternating ring which encloses part of the gamma chain. F(1) is attached to F(0) by a central stalk formed by the gamma and epsilon chains, while a peripheral stalk is formed by the delta, b and b' chains.

The protein localises to the cellular thylakoid membrane. Its function is as follows. F(1)F(0) ATP synthase produces ATP from ADP in the presence of a proton or sodium gradient. F-type ATPases consist of two structural domains, F(1) containing the extramembraneous catalytic core and F(0) containing the membrane proton channel, linked together by a central stalk and a peripheral stalk. During catalysis, ATP synthesis in the catalytic domain of F(1) is coupled via a rotary mechanism of the central stalk subunits to proton translocation. In terms of biological role, component of the F(0) channel, it forms part of the peripheral stalk, linking F(1) to F(0). This chain is ATP synthase subunit b, found in Synechococcus sp. (strain CC9605).